The chain runs to 169 residues: Cytochrome c oxidase subunit 4 isoform 1, mitochondrial (169 aa).

The N-terminal 22 residues, 1–22 (MLATRVFSLVGKRAISTSVCVR), are a transit peptide targeting the mitochondrion. The Mitochondrial matrix portion of the chain corresponds to 23-98 (AHESVVKSED…SFAEMNRGSN (76 aa)). K29 carries the N6-acetyllysine; alternate modification. Residue K29 is modified to N6-succinyllysine; alternate. K53 is subject to N6-acetyllysine. Phosphoserine is present on residues S56 and S58. K60 carries the N6-acetyllysine; alternate modification. K60 bears the N6-succinyllysine; alternate mark. Residue K67 is modified to N6-acetyllysine. The helical transmembrane segment at 99–124 (EWKTVVGGAMFFIGFTALVIMWQKHY) threads the bilayer. Residues 125–169 (VYGPLPQSFDKEWVAKQTKRMLDMKVNPIQGLASKWDYEKNEWKK) lie on the Mitochondrial intermembrane side of the membrane.

The protein belongs to the cytochrome c oxidase IV family. Component of the cytochrome c oxidase (complex IV, CIV), a multisubunit enzyme composed of 14 subunits. The complex is composed of a catalytic core of 3 subunits MT-CO1, MT-CO2 and MT-CO3, encoded in the mitochondrial DNA, and 11 supernumerary subunits COX4I1 (or COX4I2), COX5A, COX5B, COX6A1 (or COX6A2), COX6B1 (or COX6B2), COX6C, COX7A2 (or COX7A1), COX7B, COX7C, COX8A and NDUFA4, which are encoded in the nuclear genome. The complex exists as a monomer or a dimer and forms supercomplexes (SCs) in the inner mitochondrial membrane with NADH-ubiquinone oxidoreductase (complex I, CI) and ubiquinol-cytochrome c oxidoreductase (cytochrome b-c1 complex, complex III, CIII), resulting in different assemblies (supercomplex SCI(1)III(2)IV(1) and megacomplex MCI(2)III(2)IV(2)). Interacts with AFG1L. Interacts with PHB2; the interaction decreases in absence of SPHK2. Interacts with ABCB7; this interaction allows the regulation of cellular iron homeostasis and cellular reactive oxygen species (ROS) levels in cardiomyocytes. Interacts with FLVCR2; this interaction occurs in the absence of heme and is disrupted upon heme binding. Interacts with IRGC. Ubiquitous.

Its subcellular location is the mitochondrion inner membrane. It functions in the pathway energy metabolism; oxidative phosphorylation. Functionally, component of the cytochrome c oxidase, the last enzyme in the mitochondrial electron transport chain which drives oxidative phosphorylation. The respiratory chain contains 3 multisubunit complexes succinate dehydrogenase (complex II, CII), ubiquinol-cytochrome c oxidoreductase (cytochrome b-c1 complex, complex III, CIII) and cytochrome c oxidase (complex IV, CIV), that cooperate to transfer electrons derived from NADH and succinate to molecular oxygen, creating an electrochemical gradient over the inner membrane that drives transmembrane transport and the ATP synthase. Cytochrome c oxidase is the component of the respiratory chain that catalyzes the reduction of oxygen to water. Electrons originating from reduced cytochrome c in the intermembrane space (IMS) are transferred via the dinuclear copper A center (CU(A)) of subunit 2 and heme A of subunit 1 to the active site in subunit 1, a binuclear center (BNC) formed by heme A3 and copper B (CU(B)). The BNC reduces molecular oxygen to 2 water molecules using 4 electrons from cytochrome c in the IMS and 4 protons from the mitochondrial matrix. The protein is Cytochrome c oxidase subunit 4 isoform 1, mitochondrial of Homo sapiens (Human).